The sequence spans 624 residues: MAIVSSVPLASKSCLHKSLISSIHKLKPFCRTIPTLGMSRPGKYVMPSMSMSSPVSDDGVQRRTGGYHSNLWNDDIIQFLSTTYGEPAYRERGERLIDEVKNMFNSISMEDVEFSPLNDLIQRLWIVDSVERLGIDRHFKNEIKSTLDYVYSYWTQKGIGCGIESVVPDLNSTALGLRTLRLHGYPVSAEVLKHFQNQNGQFACSPSETEGEMRSIVNLYRASLIAFPGEKVMEEAEIFSTKYLKEALQKIPVSSLSREIGDVLEQDWHTNLPRLEARNYIDVFGQDTKDTKLYMKTEKLLELAKLEFNIFQSLQKTELDSLLRWWKDSGFHHITFSRHLHVEYYTLASCIAIEPQHSRFRLGFAKACHVITILDDMYDVFGTIDELELFTAQIKRWDPSATDCLPKYMKRMYMILYDMVNEMSREAETAQGRDTLNYARQAWEDFIDSYMQEAKWIATGYLPTFDEYFENGKVSSGHRVAALQPILTMDIPFPHDILKEVDFPSKLNDLASAILRLRGDTRCYKADRARGEEASCISCYMKDNPGATEEDALSHINAVISDVIKGLNWELLNPNSSVPISSKKHVFDVSRALHYGYKYRDGYSVSNIETKSLVMRTLLESVPF.

The transit peptide at 1 to 48 (MAIVSSVPLASKSCLHKSLISSIHKLKPFCRTIPTLGMSRPGKYVMPS) directs the protein to the chloroplast. The Mg(2+) site is built by D375, D379, and D527. The DDXXD motif motif lies at 375-379 (DDMYD).

This sequence belongs to the terpene synthase family. Tpsd subfamily. It depends on Mg(2+) as a cofactor. Mn(2+) serves as cofactor.

The protein resides in the plastid. It is found in the chloroplast. The enzyme catalyses (2E)-geranyl diphosphate = (-)-beta-phellandrene + diphosphate. Its pathway is terpene metabolism; oleoresin biosynthesis. Terpene synthase (TPS) involved in the biosynthesis of monoterpene natural products included in conifer oleoresin secretions and volatile emissions; these compounds contribute to biotic and abiotic stress defense against herbivores and pathogens. Catalyzes the conversion of (2E)-geranyl diphosphate (GPP) to (-)-beta-phellandrene. The polypeptide is (-)-beta-phellandrene synthase 2, chloroplastic (Picea sitchensis (Sitka spruce)).